We begin with the raw amino-acid sequence, 926 residues long: DNA mismatch repair protein MutS (926 aa).

Residues 1–67 (MAASPNPLQG…NPNQINDLDQ (67 aa)) form a disordered region. 2 stretches are compositionally biased toward polar residues: residues 18–44 (QSTT…QLKS) and 57–67 (KNPNQINDLDQ). 726–733 (GPNASGKS) contacts ATP.

The protein belongs to the DNA mismatch repair MutS family.

This protein is involved in the repair of mismatches in DNA. It is possible that it carries out the mismatch recognition step. This protein has a weak ATPase activity. This Prochlorococcus marinus (strain NATL1A) protein is DNA mismatch repair protein MutS.